The chain runs to 239 residues: Tubulin beta-3 chain (239 aa).

Residue Asn22 coordinates GTP. Positions 207–239 (EESNMNDLVSEYQQYQDASAEPXXEQEEDYEEA) are disordered. Positions 230–239 (XEQEEDYEEA) are enriched in acidic residues.

Belongs to the tubulin family. As to quaternary structure, dimer of alpha and beta chains. A typical microtubule is a hollow water-filled tube with an outer diameter of 25 nm and an inner diameter of 15 nM. Alpha-beta heterodimers associate head-to-tail to form protofilaments running lengthwise along the microtubule wall with the beta-tubulin subunit facing the microtubule plus end conferring a structural polarity. Microtubules usually have 13 protofilaments but different protofilament numbers can be found in some organisms and specialized cells. It depends on Mg(2+) as a cofactor.

Its subcellular location is the cytoplasm. It is found in the cytoskeleton. Its function is as follows. Tubulin is the major constituent of microtubules, a cylinder consisting of laterally associated linear protofilaments composed of alpha- and beta-tubulin heterodimers. Microtubules grow by the addition of GTP-tubulin dimers to the microtubule end, where a stabilizing cap forms. Below the cap, tubulin dimers are in GDP-bound state, owing to GTPase activity of alpha-tubulin. The polypeptide is Tubulin beta-3 chain (TUBB3) (Anemia phyllitidis (Fern)).